Here is a 404-residue protein sequence, read N- to C-terminus: Probable tRNA sulfurtransferase (404 aa).

Positions 60–165 (HEVAESLKEI…DEAAYISYEN (106 aa)) constitute a THUMP domain. ATP contacts are provided by residues 183–184 (ML), 208–209 (HF), arginine 265, glycine 287, and glutamine 296.

It belongs to the ThiI family.

The protein resides in the cytoplasm. It carries out the reaction [ThiI sulfur-carrier protein]-S-sulfanyl-L-cysteine + a uridine in tRNA + 2 reduced [2Fe-2S]-[ferredoxin] + ATP + H(+) = [ThiI sulfur-carrier protein]-L-cysteine + a 4-thiouridine in tRNA + 2 oxidized [2Fe-2S]-[ferredoxin] + AMP + diphosphate. The catalysed reaction is [ThiS sulfur-carrier protein]-C-terminal Gly-Gly-AMP + S-sulfanyl-L-cysteinyl-[cysteine desulfurase] + AH2 = [ThiS sulfur-carrier protein]-C-terminal-Gly-aminoethanethioate + L-cysteinyl-[cysteine desulfurase] + A + AMP + 2 H(+). Its pathway is cofactor biosynthesis; thiamine diphosphate biosynthesis. Its function is as follows. Catalyzes the ATP-dependent transfer of a sulfur to tRNA to produce 4-thiouridine in position 8 of tRNAs, which functions as a near-UV photosensor. Also catalyzes the transfer of sulfur to the sulfur carrier protein ThiS, forming ThiS-thiocarboxylate. This is a step in the synthesis of thiazole, in the thiamine biosynthesis pathway. The sulfur is donated as persulfide by IscS. This chain is Probable tRNA sulfurtransferase, found in Streptococcus agalactiae serotype III (strain NEM316).